A 77-amino-acid polypeptide reads, in one-letter code: Inhibitor of histone-like protein HU (77 aa).

As to quaternary structure, interacts with host homodimeric histone-like protein (HU) hupA; thereby replacing dsDNA from the HU-DNA complex.

In terms of biological role, acts as a host growth inhibitor by inhibiting DNA-binding of microbial histone-like protein HU, thereby preventing chromosome segregation and causing filamentous cell morphology and growth defects in the host. The sequence is that of Inhibitor of histone-like protein HU from Bacillus phage SP01 (Bacteriophage SP01).